Here is a 187-residue protein sequence, read N- to C-terminus: Putative manganese efflux pump MntP (187 aa).

A run of 6 helical transmembrane segments spans residues F3–C23, H35–Y55, F56–L76, L107–L127, V129–A149, and L166–F186.

The protein belongs to the MntP (TC 9.B.29) family.

It localises to the cell inner membrane. In terms of biological role, probably functions as a manganese efflux pump. The chain is Putative manganese efflux pump MntP from Campylobacter jejuni (strain RM1221).